Reading from the N-terminus, the 76-residue chain is Conotoxin Gla(1)-TxVI (76 aa).

The signal sequence occupies residues 1 to 19 (MEKLTILLLVAAVLMSTQA). The propeptide occupies 20-45 (LVERAGENHSKENINFLLKRKRAADR). Position 48 is a 6'-bromotryptophan (Trp48). Glu50 carries the 4-carboxyglutamate modification. Intrachain disulfides connect Cys51–Cys65, Cys58–Cys69, and Cys64–Cys73. At Pro61 the chain carries 4-hydroxyproline. A 4-carboxyglutamate mark is found at Glu63, Glu67, and Glu70. Position 76 is a 6'-bromotryptophan (Trp76).

As to expression, expressed by the venom duct.

It is found in the secreted. This is Conotoxin Gla(1)-TxVI from Conus textile (Cloth-of-gold cone).